Consider the following 720-residue polypeptide: Fatty acid CoA ligase Acsl3 (720 aa).

Residues 21 to 41 (ILLYFIHFLISLYTILTYIPF) form a helical; Signal-anchor for type III membrane protein membrane-spanning segment. Residues 42 to 720 (YFFSESRQEK…ADIERMYGRK (679 aa)) lie on the Cytoplasmic side of the membrane. The residue at position 683 (Ser-683) is a Phosphoserine.

It belongs to the ATP-dependent AMP-binding enzyme family. It depends on Mg(2+) as a cofactor.

The protein localises to the mitochondrion outer membrane. Its subcellular location is the peroxisome membrane. It localises to the microsome membrane. It is found in the endoplasmic reticulum membrane. The catalysed reaction is a long-chain fatty acid + ATP + CoA = a long-chain fatty acyl-CoA + AMP + diphosphate. The enzyme catalyses (5Z,8Z,11Z,14Z)-eicosatetraenoate + ATP + CoA = (5Z,8Z,11Z,14Z)-eicosatetraenoyl-CoA + AMP + diphosphate. It catalyses the reaction (E)-hexadec-2-enoate + ATP + CoA = (2E)-hexadecenoyl-CoA + AMP + diphosphate. It carries out the reaction 15-hydroxy-(5Z,8Z,11Z,13E)-eicosatetraenoate + ATP + CoA = 15-hydroxy-(5Z,8Z,11Z,13E)-eicosatetraenoyl-CoA + AMP + diphosphate. The catalysed reaction is 12-hydroxy-(5Z,8Z,10E,14Z)-eicosatetraenoate + ATP + CoA = 12-hydroxy-(5Z,8Z,10E,14Z)-eicosatetraenoyl-CoA + AMP + diphosphate. The enzyme catalyses 5-hydroxy-(6E,8Z,11Z,14Z)-eicosatetraenoate + ATP + CoA = 5-hydroxy-(6E,8Z,11Z,14Z)-eicosatetraenoyl-CoA + AMP + diphosphate. It catalyses the reaction 14,15-epoxy-(5Z,8Z,11Z)-eicosatrienoate + ATP + CoA = 14,15-epoxy-(5Z,8Z,11Z)-eicosatrienoyl-CoA + AMP + diphosphate. It carries out the reaction 11,12-epoxy-(5Z,8Z,14Z)-eicosatrienoate + ATP + CoA = 11,12-epoxy-(5Z,8Z,14Z)-eicosatrienoyl-CoA + AMP + diphosphate. The catalysed reaction is a medium-chain fatty acid + ATP + CoA = a medium-chain fatty acyl-CoA + AMP + diphosphate. The enzyme catalyses hexadecanoate + ATP + CoA = hexadecanoyl-CoA + AMP + diphosphate. It catalyses the reaction tetradecanoate + ATP + CoA = tetradecanoyl-CoA + AMP + diphosphate. It carries out the reaction dodecanoate + ATP + CoA = dodecanoyl-CoA + AMP + diphosphate. The catalysed reaction is octadecanoate + ATP + CoA = octadecanoyl-CoA + AMP + diphosphate. The enzyme catalyses eicosanoate + ATP + CoA = eicosanoyl-CoA + AMP + diphosphate. It catalyses the reaction (9Z)-octadecenoate + ATP + CoA = (9Z)-octadecenoyl-CoA + AMP + diphosphate. It carries out the reaction (9Z)-hexadecenoate + ATP + CoA = (9Z)-hexadecenoyl-CoA + AMP + diphosphate. The catalysed reaction is (9Z,12Z)-octadecadienoate + ATP + CoA = (9Z,12Z)-octadecadienoyl-CoA + AMP + diphosphate. The enzyme catalyses (9Z,12Z,15Z)-octadecatrienoate + ATP + CoA = (9Z,12Z,15Z)-octadecatrienoyl-CoA + AMP + diphosphate. It catalyses the reaction (4Z,7Z,10Z,13Z,16Z,19Z)-docosahexaenoate + ATP + CoA = (4Z,7Z,10Z,13Z,16Z,19Z)-docosahexaenoyl-CoA + AMP + diphosphate. It carries out the reaction (5Z,8Z,11Z,14Z,17Z)-eicosapentaenoate + ATP + CoA = (5Z,8Z,11Z,14Z,17Z)-eicosapentaenoyl-CoA + AMP + diphosphate. The catalysed reaction is a fatty acid + ATP + CoA = a fatty acyl-CoA + AMP + diphosphate. In terms of biological role, acyl-CoA synthetases (ACSL) activates long-chain fatty acids for both synthesis of cellular lipids, and degradation via beta-oxidation. Required for the incorporation of fatty acids into phosphatidylcholine, the major phospholipid located on the surface of VLDL (very low density lipoproteins). Has mainly an anabolic role in energy metabolism. Mediates hepatic lipogenesis. Preferentially uses myristate, laurate, arachidonate and eicosapentaenoate as substrates. Both isoforms exhibit the same level of activity. This chain is Fatty acid CoA ligase Acsl3, found in Homo sapiens (Human).